We begin with the raw amino-acid sequence, 131 residues long: Profilin-7 (131 aa).

An intrachain disulfide couples Cys-13 to Cys-115. The short motif at 81-97 is the Involved in PIP2 interaction element; it reads AVIRGKKGSGGITVKKT. A Phosphothreonine modification is found at Thr-111.

This sequence belongs to the profilin family. Occurs in many kinds of cells as a complex with monomeric actin in a 1:1 ratio. In terms of processing, phosphorylated by MAP kinases.

The protein resides in the cytoplasm. It localises to the cytoskeleton. In terms of biological role, binds to actin and affects the structure of the cytoskeleton. At high concentrations, profilin prevents the polymerization of actin, whereas it enhances it at low concentrations. The chain is Profilin-7 from Zea mays (Maize).